The following is a 654-amino-acid chain: Mitochondrial-processing peptidase subunit alpha-1 (654 aa).

Positions 73-94 (SSSSYKGNNNNNNKLSYTTSSN) are disordered. Residues 381–446 (HKNHLKSQLQ…EQLELQQVKE (66 aa)) adopt a coiled-coil conformation.

Belongs to the peptidase M16 family. As to quaternary structure, heterodimer of alpha and beta subunits, forming the mitochondrial processing protease (MPP) in which subunit alpha is involved in substrate recognition and binding and subunit beta is the catalytic subunit.

It is found in the mitochondrion matrix. In terms of biological role, substrate recognition and binding subunit of the essential mitochondrial processing protease (MPP), which cleaves the mitochondrial sequence off newly imported precursors proteins. This Dictyostelium discoideum (Social amoeba) protein is Mitochondrial-processing peptidase subunit alpha-1 (mppA1).